A 94-amino-acid chain; its full sequence is Large ribosomal subunit protein bL27 (94 aa).

The propeptide occupies 1–9 (MLKLNLQFF).

Belongs to the bacterial ribosomal protein bL27 family. In terms of processing, the N-terminus is cleaved by ribosomal processing cysteine protease Prp.

In Staphylococcus haemolyticus (strain JCSC1435), this protein is Large ribosomal subunit protein bL27.